The sequence spans 225 residues: Urease accessory protein UreG 2 (225 aa).

Gly-31 to Thr-38 contributes to the GTP binding site.

This sequence belongs to the SIMIBI class G3E GTPase family. UreG subfamily. In terms of assembly, homodimer. UreD, UreF and UreG form a complex that acts as a GTP-hydrolysis-dependent molecular chaperone, activating the urease apoprotein by helping to assemble the nickel containing metallocenter of UreC. The UreE protein probably delivers the nickel.

The protein resides in the cytoplasm. Its function is as follows. Facilitates the functional incorporation of the urease nickel metallocenter. This process requires GTP hydrolysis, probably effectuated by UreG. The polypeptide is Urease accessory protein UreG 2 (Streptomyces griseus subsp. griseus (strain JCM 4626 / CBS 651.72 / NBRC 13350 / KCC S-0626 / ISP 5235)).